The primary structure comprises 966 residues: Phosphoenolpyruvate carboxylase, housekeeping isozyme (966 aa).

S11 bears the Phosphoserine mark. Active-site residues include H172 and K601.

Belongs to the PEPCase type 1 family. In terms of assembly, homotetramer. Mg(2+) is required as a cofactor.

The protein localises to the cytoplasm. The enzyme catalyses oxaloacetate + phosphate = phosphoenolpyruvate + hydrogencarbonate. Its activity is regulated as follows. By light-reversible phosphorylation. Through the carboxylation of phosphoenolpyruvate (PEP) it forms oxaloacetate, a four-carbon dicarboxylic acid source for the tricarboxylic acid cycle. The sequence is that of Phosphoenolpyruvate carboxylase, housekeeping isozyme from Saccharum hybrid (Sugarcane).